Reading from the N-terminus, the 446-residue chain is MPEYLSVSTLTKYLKMKFERDPYLERVYLTGQVSNFRRRPNHQYFSLKDEKAVIQVTIWSGVYQKLGFELEEGMKINVIGRVQLYEPSGSYSIIIEKAEPDGIGALAIQFEQLKKKLGEEGLFQDKFKQSLPQFPKKIGVVTSPSGAVIRDIITTVSRRFPGVEIVLYPTKVQGDGAAAQIADHIRLANERSDLDVLIIGRGGGSIEDLWAFNEEETVRAIFESRIPVISSVGHETDTTLADFAADRRAATPTAAAELATPVTKLDLLGHLQQQENRMSRAISNRLSYYRERLNKLTQSVIFRQPERLYDGHLQKLDQLNLRLKQKIREYYSEEKQRVKILQHRLEALNPHSRVQRLQEQTAQLERLLRSNMAVIYDNKVAQVRRLSEALLMLDTSRIVARGYAIVQKNQKVIESSAGIEEKDELTLLMRDGQLEVEVKHVQRKEI.

It belongs to the XseA family. Heterooligomer composed of large and small subunits.

Its subcellular location is the cytoplasm. It catalyses the reaction Exonucleolytic cleavage in either 5'- to 3'- or 3'- to 5'-direction to yield nucleoside 5'-phosphates.. Bidirectionally degrades single-stranded DNA into large acid-insoluble oligonucleotides, which are then degraded further into small acid-soluble oligonucleotides. This is Exodeoxyribonuclease 7 large subunit from Streptococcus gordonii (strain Challis / ATCC 35105 / BCRC 15272 / CH1 / DL1 / V288).